The primary structure comprises 545 residues: Ribulokinase (545 aa).

It belongs to the ribulokinase family.

It catalyses the reaction D-ribulose + ATP = D-ribulose 5-phosphate + ADP + H(+). It carries out the reaction L-ribulose + ATP = L-ribulose 5-phosphate + ADP + H(+). Its pathway is carbohydrate degradation; L-arabinose degradation via L-ribulose; D-xylulose 5-phosphate from L-arabinose (bacterial route): step 2/3. The polypeptide is Ribulokinase (Staphylococcus aureus (strain bovine RF122 / ET3-1)).